Reading from the N-terminus, the 208-residue chain is Large ribosomal subunit protein uL3 (208 aa).

A disordered region spans residues 116 to 148; that stretch reads GFQGVIKRHGQSRGPMAHGSRYHRRPGSMGPVA.

Belongs to the universal ribosomal protein uL3 family. Part of the 50S ribosomal subunit. Forms a cluster with proteins L14 and L19.

Its function is as follows. One of the primary rRNA binding proteins, it binds directly near the 3'-end of the 23S rRNA, where it nucleates assembly of the 50S subunit. This chain is Large ribosomal subunit protein uL3, found in Streptococcus pyogenes serotype M6 (strain ATCC BAA-946 / MGAS10394).